Consider the following 725-residue polypeptide: Aminopeptidase RNPEPL1 (725 aa).

Residue 326–330 (VAMEN) coordinates substrate. His353 is a Zn(2+) binding site. The Proton acceptor role is filled by Glu354. Zn(2+) is bound by residues His357 and Glu376. The disordered stretch occupies residues 676–699 (GLGSSTEPASEPSTELGKAEADTD). Positions 679-690 (SSTEPASEPSTE) are enriched in low complexity.

The protein belongs to the peptidase M1 family. Zn(2+) serves as cofactor. Ubiquitously expressed. Expressed at relatively higher levels in heart and skeletal muscle.

It catalyses the reaction Release of N-terminal amino acids, preferentially methionine, from peptides and arylamides.. Inhibited by calcium but not affected by chloride ions. Inhibited by amastatin and to a lower extent by bestatin. Weakly inhibited by puromycin. In terms of biological role, broad specificity aminopeptidase which preferentially hydrolyzes an N-terminal methionine, citrulline or glutamine. This chain is Aminopeptidase RNPEPL1, found in Homo sapiens (Human).